We begin with the raw amino-acid sequence, 91 residues long: ATP synthase subunit c (91 aa).

2 consecutive transmembrane segments (helical) span residues 4–24 (FTMC…GTGI) and 53–73 (IGLA…LIIL).

Belongs to the ATPase C chain family. In terms of assembly, F-type ATPases have 2 components, F(1) - the catalytic core - and F(0) - the membrane proton channel. F(1) has five subunits: alpha(3), beta(3), gamma(1), delta(1), epsilon(1). F(0) has three main subunits: a(1), b(2) and c(10-14). The alpha and beta chains form an alternating ring which encloses part of the gamma chain. F(1) is attached to F(0) by a central stalk formed by the gamma and epsilon chains, while a peripheral stalk is formed by the delta and b chains.

Its subcellular location is the cell inner membrane. In terms of biological role, f(1)F(0) ATP synthase produces ATP from ADP in the presence of a proton or sodium gradient. F-type ATPases consist of two structural domains, F(1) containing the extramembraneous catalytic core and F(0) containing the membrane proton channel, linked together by a central stalk and a peripheral stalk. During catalysis, ATP synthesis in the catalytic domain of F(1) is coupled via a rotary mechanism of the central stalk subunits to proton translocation. Key component of the F(0) channel; it plays a direct role in translocation across the membrane. A homomeric c-ring of between 10-14 subunits forms the central stalk rotor element with the F(1) delta and epsilon subunits. This chain is ATP synthase subunit c, found in Citrifermentans bemidjiense (strain ATCC BAA-1014 / DSM 16622 / JCM 12645 / Bem) (Geobacter bemidjiensis).